The chain runs to 174 residues: ATP-dependent protease subunit HslV (174 aa).

Residue Thr-2 is part of the active site. The Na(+) site is built by Gly-157, Cys-160, and Thr-163.

Belongs to the peptidase T1B family. HslV subfamily. A double ring-shaped homohexamer of HslV is capped on each side by a ring-shaped HslU homohexamer. The assembly of the HslU/HslV complex is dependent on binding of ATP.

The protein resides in the cytoplasm. It carries out the reaction ATP-dependent cleavage of peptide bonds with broad specificity.. Allosterically activated by HslU binding. Functionally, protease subunit of a proteasome-like degradation complex believed to be a general protein degrading machinery. The sequence is that of ATP-dependent protease subunit HslV from Shewanella oneidensis (strain ATCC 700550 / JCM 31522 / CIP 106686 / LMG 19005 / NCIMB 14063 / MR-1).